A 306-amino-acid polypeptide reads, in one-letter code: Curved DNA-binding protein (306 aa).

Positions 5–69 (DYYAIMGVKP…QRRAEYDQMW (65 aa)) constitute a J domain.

It localises to the cytoplasm. Its subcellular location is the nucleoid. DNA-binding protein that preferentially recognizes a curved DNA sequence. It is probably a functional analog of DnaJ; displays overlapping activities with DnaJ, but functions under different conditions, probably acting as a molecular chaperone in an adaptive response to environmental stresses other than heat shock. Lacks autonomous chaperone activity; binds native substrates and targets them for recognition by DnaK. Its activity is inhibited by the binding of CbpM. The polypeptide is Curved DNA-binding protein (Escherichia coli (strain 55989 / EAEC)).